The following is a 273-amino-acid chain: Alkaline ceramidase 1 (273 aa).

Over 1-36 (MHVPGTRAKMSSIFAYQSSEVDWCESNFQHSELVAE) the chain is Lumenal. Residues Asp22, Trp23, Glu25, Asn27, and Glu36 each contribute to the Ca(2+) site. Residues 37 to 57 (FYNTFSNVFFLIFGPLMMFLM) form a helical membrane-spanning segment. Topologically, residues 58 to 72 (HPYAQKRTRCFYGVS) are cytoplasmic. 2 helical membrane-spanning segments follow: residues 73 to 93 (VLFMLIGLFSMYFHMTLSFLG) and 94 to 114 (QLLDEISILWLLASGYSVWLP). His86 is a Zn(2+) binding site. Residues 115–126 (RCYFPKFVKGNR) lie on the Cytoplasmic side of the membrane. The helical transmembrane segment at 127–147 (FYFSCLVTITTIISTFLTFVK) threads the bilayer. The Lumenal segment spans residues 148–149 (PT). The chain crosses the membrane as a helical span at residues 150–167 (VNAYALNSIAIHILYIVR). Residues 168-177 (TEYKKIRDDD) are Cytoplasmic-facing. Residues 178–198 (LRHLIAVSVVLWAAALTSWIS) form a helical membrane-spanning segment. The Lumenal portion of the chain corresponds to 199 to 215 (DRVLCSFWQRIHFYYLH). Zn(2+) is bound by residues His215 and His219. Residues 216–236 (SIWHVLISITFPYGIVTMALV) form a helical membrane-spanning segment. Over 237 to 273 (DAKYEMPDKTLKVHYWPRDSWVIGLPYVEIQENDKNC) the chain is Cytoplasmic.

This sequence belongs to the alkaline ceramidase family. Zn(2+) serves as cofactor. As to expression, highly expressed in skin. Weakly or not expressed in other tissues. Expressed by granular layer of interfollicular epidermis, sebaceous glands and infundibulum.

Its subcellular location is the endoplasmic reticulum membrane. It catalyses the reaction an N-acylsphing-4-enine + H2O = sphing-4-enine + a fatty acid. It carries out the reaction N-tetracosanoyl-sphing-4-enine + H2O = tetracosanoate + sphing-4-enine. The enzyme catalyses an N-acylsphinganine + H2O = sphinganine + a fatty acid. The catalysed reaction is N-(9Z-octadecenoyl)-sphing-4-enine + H2O = sphing-4-enine + (9Z)-octadecenoate. It catalyses the reaction N-(15Z-tetracosenoyl)-sphing-4-enine + H2O = (15Z)-tetracosenoate + sphing-4-enine. It functions in the pathway lipid metabolism; sphingolipid metabolism. With respect to regulation, inhibited by sphingosine. Inhibited by Mn(2+), Zn(2+), and Cu(2+) in a dose-dependent manner. Slightly activated by Ca(2+) in a dose-dependent manner. Endoplasmic reticulum ceramidase that catalyzes the hydrolysis of ceramides into sphingosine and free fatty acids at alkaline pH. Ceramides, sphingosine, and its phosphorylated form sphingosine-1-phosphate are bioactive lipids that mediate cellular signaling pathways regulating several biological processes including cell proliferation, apoptosis and differentiation. Exhibits a strong substrate specificity towards the natural stereoisomer of ceramides with D-erythro-sphingosine as a backbone and has a higher activity towards very long-chain unsaturated fatty acids like the C24:1-ceramide. May also hydrolyze dihydroceramides to produce dihydrosphingosine. ACER1 is a skin-specific ceramidase that regulates the levels of ceramides, sphingosine and sphingosine-1-phosphate in the epidermis, mediates the calcium-induced differentiation of epidermal keratinocytes and more generally plays an important role in skin homeostasis. In Mus musculus (Mouse), this protein is Alkaline ceramidase 1.